A 146-amino-acid chain; its full sequence is Cytochrome c-556 (146 aa).

The N-terminal stretch at 1 to 24 (MCMKLKTITAAMLFGCLCAGAVYA) is a signal peptide. Heme c-binding residues include methionine 35, cysteine 135, cysteine 138, and histidine 139.

As to quaternary structure, monomer. In terms of processing, binds 1 heme c group covalently per subunit.

Its function is as follows. Low-spin monoheme cytochrome c. The chain is Cytochrome c-556 from Agrobacterium fabrum (strain C58 / ATCC 33970) (Agrobacterium tumefaciens (strain C58)).